The chain runs to 344 residues: MSTSLSYRDAGVDIDAGDQLVENIKPFAKRTMRPEVLGDLGGFGALVEIGKKYQNPVLVSGTDGVGTKLKLAFDWDKHDTVGIDLVAMSVNDILVQGAEPLFFLDYFACGKLDVPRATDVIKGIAQGCEESGCALIGGETAEMPGMYPVGEYDLAGFAVGVVEKENVITGRSIGVGDVVLGLASNGAHSNGYSLIRKIIERDNPDLDAEFDNGKTLREAVIAPTRLYVKPILAALEKFTIKGMAHITGGGITENVPRVLPENTVAQIDAKSWELPKLFQWLQKAGNVETQEMYRTFNCGIGMVVIVAAEDADAVQGLLGEQGETVYRLGLIRERQGDEHQTQVA.

It belongs to the AIR synthase family.

The protein localises to the cytoplasm. It carries out the reaction 2-formamido-N(1)-(5-O-phospho-beta-D-ribosyl)acetamidine + ATP = 5-amino-1-(5-phospho-beta-D-ribosyl)imidazole + ADP + phosphate + H(+). It functions in the pathway purine metabolism; IMP biosynthesis via de novo pathway; 5-amino-1-(5-phospho-D-ribosyl)imidazole from N(2)-formyl-N(1)-(5-phospho-D-ribosyl)glycinamide: step 2/2. This Neisseria meningitidis serogroup B (strain ATCC BAA-335 / MC58) protein is Phosphoribosylformylglycinamidine cyclo-ligase.